The sequence spans 868 residues: Leucine-rich repeat receptor-like serine/threonine-protein kinase At2g14510 (868 aa).

The first 23 residues, 1-23, serve as a signal peptide directing secretion; the sequence is METRNKFMLLACATFSIMSLVKS. Residues 24 to 510 lie on the Extracellular side of the membrane; it reads QNQQGFISLD…KHQPKSWLVA (487 aa). N-linked (GlcNAc...) asparagine glycosylation is found at N48, N68, N231, N235, N258, N291, N433, and N446. LRR repeat units follow at residues 412–435, 436–458, and 460–482; these read RIIS…QNLT, MLRE…LATI, and PLLV…LQDR. An N-linked (GlcNAc...) asparagine glycan is attached at N495. Residues 511–531 form a helical membrane-spanning segment; it reads IVASISCVAVTIIVLVLIFIF. The Cytoplasmic portion of the chain corresponds to 532–868; the sequence is RRRKSSTRKV…TFISDIPSAR (337 aa). Residues 563-832 enclose the Protein kinase domain; that stretch reads NNFEVVLGKG…NMTRVAHELN (270 aa). Residues 569-577 and K590 contribute to the ATP site; that span reads LGKGGFGVV. The residue at position 635 (Y635) is a Phosphotyrosine. The active-site Proton acceptor is the D687. At S721 the chain carries Phosphoserine. Phosphothreonine occurs at positions 722 and 727. At Y735 the chain carries Phosphotyrosine.

The protein belongs to the protein kinase superfamily. Ser/Thr protein kinase family.

Its subcellular location is the cell membrane. It carries out the reaction L-seryl-[protein] + ATP = O-phospho-L-seryl-[protein] + ADP + H(+). It catalyses the reaction L-threonyl-[protein] + ATP = O-phospho-L-threonyl-[protein] + ADP + H(+). The polypeptide is Leucine-rich repeat receptor-like serine/threonine-protein kinase At2g14510 (Arabidopsis thaliana (Mouse-ear cress)).